The sequence spans 178 residues: Large ribosomal subunit protein bL17 (178 aa).

Low complexity-rich tracts occupy residues 123-139 and 151-160; these read KAPASAADAKAQINTAT and EDAAAQAPVA. The disordered stretch occupies residues 123-178; sequence KAPASAADAKAQINTATEAKEAEPEAPAEDAAAQAPVADEQKAAEVDEKAEEKPEA. Basic and acidic residues predominate over residues 161 to 178; that stretch reads DEQKAAEVDEKAEEKPEA.

This sequence belongs to the bacterial ribosomal protein bL17 family. As to quaternary structure, part of the 50S ribosomal subunit. Contacts protein L32.

This Cutibacterium acnes (strain DSM 16379 / KPA171202) (Propionibacterium acnes) protein is Large ribosomal subunit protein bL17.